Here is a 360-residue protein sequence, read N- to C-terminus: Tyrosine-protein phosphatase non-receptor type 7 (360 aa).

A disordered region spans residues 1-37 (MVQAHGGRSRAQPLTLSLGAAMTQPPPEKTPAKKHVR). Positions 38 to 51 (LQERRGSNVALMLD) are interaction with MAP kinases. Serine 44 carries the phosphoserine modification. Threonine 66 is subject to Phosphothreonine. 3 positions are modified to phosphoserine: serine 93, serine 110, and serine 143. A Tyrosine-protein phosphatase domain is found at 97–350 (LEEEFLKIPS…QFLHHTLALY (254 aa)). Substrate-binding positions include aspartate 257, 291–297 (CSAGIGR), and glutamine 335. Cysteine 291 acts as the Phosphocysteine intermediate in catalysis. Cysteine 291 carries the cysteine sulfenic acid (-SOH) modification.

The protein belongs to the protein-tyrosine phosphatase family. Non-receptor class subfamily. In terms of assembly, monomer. Interacts with MAPK1, MAPK3 and several other MAP kinases. Post-translationally, phosphorylated on serine residues in resting T-cells. Phosphorylation increases upon exposure to stimuli that increase intracellular cAMP levels. Phosphorylation leads to dissociation of bound MAP kinases. Oxidized at active site cysteine. Treatment with pervanadate (vanadate and H(2)O(2)) or with antigen enhanced oxidation of active site cysteine. Expressed exclusively in thymus and spleen.

The protein localises to the cytoplasm. It localises to the cytoskeleton. It catalyses the reaction O-phospho-L-tyrosyl-[protein] + H2O = L-tyrosyl-[protein] + phosphate. Inhibited in cells after FCER1A triggering. Protein phosphatase that acts preferentially on tyrosine-phosphorylated MAPK1. Plays a role in the regulation of T and B-lymphocyte development and signal transduction. This is Tyrosine-protein phosphatase non-receptor type 7 (PTPN7) from Homo sapiens (Human).